Here is a 196-residue protein sequence, read N- to C-terminus: MQSFIAKQLQDHLALFQKMEAELTAPVAELAERLIETFKIGNKLLIMGNGGSAADAQHFAGEIVSRFRIERPGLPAIALSTDTSIITAIGNDYGFERIFSRQVEALAVPGDAVIGISTSGNSPNVQKALEVARQAGCTTIGLLGKDGGSIKAVCDIPLIIPSNDTPRVQEGHIAVIHILCDLIEQGLFGIFAGEGR.

The 160-residue stretch at 34-193 folds into the SIS domain; sequence LIETFKIGNK…EQGLFGIFAG (160 aa). 49–51 lines the substrate pocket; the sequence is NGG. Zn(2+) is bound by residues His-58 and Glu-62. Substrate is bound by residues Glu-62, 91-92, 117-119, Ser-122, and Gln-169; these read ND and STS. Zn(2+)-binding residues include Gln-169 and His-177.

It belongs to the SIS family. GmhA subfamily. In terms of assembly, homotetramer. Zn(2+) serves as cofactor.

The protein localises to the cytoplasm. The catalysed reaction is 2 D-sedoheptulose 7-phosphate = D-glycero-alpha-D-manno-heptose 7-phosphate + D-glycero-beta-D-manno-heptose 7-phosphate. Its pathway is carbohydrate biosynthesis; D-glycero-D-manno-heptose 7-phosphate biosynthesis; D-glycero-alpha-D-manno-heptose 7-phosphate and D-glycero-beta-D-manno-heptose 7-phosphate from sedoheptulose 7-phosphate: step 1/1. Functionally, catalyzes the isomerization of sedoheptulose 7-phosphate in D-glycero-D-manno-heptose 7-phosphate. The protein is Phosphoheptose isomerase of Trichlorobacter lovleyi (strain ATCC BAA-1151 / DSM 17278 / SZ) (Geobacter lovleyi).